The sequence spans 324 residues: Fructose-1,6-bisphosphatase class 1 (324 aa).

4 residues coordinate Mg(2+): Glu88, Asp107, Leu109, and Asp110. Substrate contacts are provided by residues 110 to 113, Asn199, and Lys265; that span reads DGSS. Position 271 (Glu271) interacts with Mg(2+).

Belongs to the FBPase class 1 family. Homotetramer. Mg(2+) is required as a cofactor.

Its subcellular location is the cytoplasm. It carries out the reaction beta-D-fructose 1,6-bisphosphate + H2O = beta-D-fructose 6-phosphate + phosphate. It functions in the pathway carbohydrate biosynthesis; gluconeogenesis. The protein is Fructose-1,6-bisphosphatase class 1 of Neisseria gonorrhoeae (strain ATCC 700825 / FA 1090).